We begin with the raw amino-acid sequence, 388 residues long: Processive diacylglycerol beta-glucosyltransferase (388 aa).

It belongs to the glycosyltransferase 28 family. UgtP subfamily.

The protein localises to the cell membrane. The catalysed reaction is a 1,2-diacyl-3-O-(beta-D-glucopyranosyl)-sn-glycerol + UDP-alpha-D-glucose = a 1,2-diacyl-3-O-(beta-D-Glc-(1-&gt;6)-beta-D-Glc)-sn-glycerol + UDP + H(+). It carries out the reaction a 1,2-diacyl-3-O-(beta-D-Glc-(1-&gt;6)-beta-D-Glc)-sn-glycerol + UDP-alpha-D-glucose = a 1,2-diacyl-3-O-(beta-D-Glc-(1-&gt;6)-beta-D-Glc-(1-&gt;6)-beta-D-Glc)-sn-glycerol + UDP + H(+). It catalyses the reaction a 1,2-diacyl-sn-glycerol + UDP-alpha-D-glucose = a 1,2-diacyl-3-O-(beta-D-glucopyranosyl)-sn-glycerol + UDP + H(+). It participates in glycolipid metabolism; diglucosyl-diacylglycerol biosynthesis. Its function is as follows. Processive glucosyltransferase involved in the biosynthesis of both the bilayer- and non-bilayer-forming membrane glucolipids. Is able to successively transfer up to three glucosyl residues to diacylglycerol (DAG), thereby catalyzing the formation of beta-monoglucosyl-DAG (3-O-(beta-D-glucopyranosyl)-1,2-diacyl-sn-glycerol), beta-diglucosyl-DAG (3-O-(beta-D-glucopyranosyl-beta-(1-&gt;6)-D-glucopyranosyl)-1,2-diacyl-sn-glycerol) and beta-triglucosyl-DAG (3-O-(beta-D-glucopyranosyl-beta-(1-&gt;6)-D-glucopyranosyl-beta-(1-&gt;6)-D-glucopyranosyl)-1,2-diacyl-sn-glycerol). Beta-diglucosyl-DAG is the predominant glycolipid found in Bacillales and is also used as a membrane anchor for lipoteichoic acid (LTA). This is Processive diacylglycerol beta-glucosyltransferase from Bacillus cereus (strain ATCC 10987 / NRS 248).